The chain runs to 89 residues: UPF0147 protein Saci_0891 (89 aa).

The protein belongs to the UPF0147 family.

The sequence is that of UPF0147 protein Saci_0891 from Sulfolobus acidocaldarius (strain ATCC 33909 / DSM 639 / JCM 8929 / NBRC 15157 / NCIMB 11770).